The following is a 146-amino-acid chain: MKSENVNKRDEYQRVFSCFDKSHQGKVSVSTIERCVDAIKSGKRAVVDQEDTTNPNPEESTDDKSLELEDFVKLVEEGEEADKEKDLKEAFKLYEESEGITPKSLKRMLSLLGESKSLKDCEVMISQFDINRDGIINFDEFRAMMQ.

Residues 7–42 form the EF-hand 1 domain; sequence NKRDEYQRVFSCFDKSHQGKVSVSTIERCVDAIKSG. The tract at residues 44 to 65 is disordered; it reads RAVVDQEDTTNPNPEESTDDKS. The EF-hand 2 domain maps to 116–146; sequence KSLKDCEVMISQFDINRDGIINFDEFRAMMQ. Residues Asp129, Asn131, Asp133, and Glu140 each coordinate Ca(2+).

In terms of biological role, potential calcium sensor. This chain is Probable calcium-binding protein CML40 (CML40), found in Arabidopsis thaliana (Mouse-ear cress).